A 204-amino-acid polypeptide reads, in one-letter code: MGAYKYIEELWKKKQSDVMRFLQRVRCWEFRQLPGIVRVTRPSRPDKARRLGYKAKQGYVVYRVRVRRGGRKRPVPKGIVYGKPKNQGITQLKFQRSLRSVAEERAGRKLGGLRVLNSYWINQDSTYKYYEIILVDQAHSAIRKDPRINWICNAVHKHRELRGLTSAGKKYRGLRGRGHLYHKARPSKRATWKRNNTLSLRRYR.

It belongs to the eukaryotic ribosomal protein eL15 family.

The polypeptide is Large ribosomal subunit protein eL15z (SB61) (Picea mariana (Black spruce)).